The sequence spans 182 residues: Adenine phosphoribosyltransferase (182 aa).

This sequence belongs to the purine/pyrimidine phosphoribosyltransferase family. In terms of assembly, homodimer.

It is found in the cytoplasm. It catalyses the reaction AMP + diphosphate = 5-phospho-alpha-D-ribose 1-diphosphate + adenine. It participates in purine metabolism; AMP biosynthesis via salvage pathway; AMP from adenine: step 1/1. Functionally, catalyzes a salvage reaction resulting in the formation of AMP, that is energically less costly than de novo synthesis. In Pseudomonas putida (strain GB-1), this protein is Adenine phosphoribosyltransferase.